Consider the following 291-residue polypeptide: Undecaprenyl-diphosphatase (291 aa).

The next 8 membrane-spanning stretches (helical) occupy residues 1–21, 48–68, 102–122, 126–146, 162–182, 203–223, 231–251, and 267–287; these read MFII…LTEF, SAFT…AWVF, LHVL…DDFI, LFSV…MIIA, INYF…WPGF, SDFT…LSLL, IADI…GLIA, and FAIY…GFGI.

The protein belongs to the UppP family.

The protein localises to the cell membrane. The enzyme catalyses di-trans,octa-cis-undecaprenyl diphosphate + H2O = di-trans,octa-cis-undecaprenyl phosphate + phosphate + H(+). In terms of biological role, catalyzes the dephosphorylation of undecaprenyl diphosphate (UPP). Confers resistance to bacitracin. The protein is Undecaprenyl-diphosphatase of Staphylococcus aureus (strain bovine RF122 / ET3-1).